The following is a 720-amino-acid chain: MQCVKLPVSVTVEINVLLLAVTALALFTRLYGIHFPKAVVFDEVYYGQFLSLYMKQVFFIDESGPPFGHMILALGAYLGGFDGNFVWNRIGAEYPGNVPVWSLRLIPALAGSFCVPLAYLVVVELGYSHFSALGACALLLMENSLIVQSRFMLLESVLIFFLLLAVLSYLRFHKARNSFFKWFWLVICGVSCAFGIGVKYMGMFTYFLLLSLAAVHTWQLIGDQTLSHGKVMFQVLVRFLALVVLPVIMYLGFFYIHLTLLYRSGPHDQMMSSAFQASLEGGLARITQGQPLDVAFGSQVTLRTVSGKPVPCWLHSHKANYPIRYENGRGSSHQQQVTCYPFKDVNNWWIIKDPGRQSLVVSSPPKPVRHGDIIQLLHGMTTRYLNTHDVAAPMSPHSQEVSGYIDFNVSMPAQNLWRVDIVNRESEKEIWKTILSEVRLVHVNTSAVLKLSGASLPEWGFKQLEVVGDKIYKGYQQTGMWNVEEHRYGRSQEPKERELELKSPTHSDVNKNLTFMAKFLELQWKMLTVKNEESEHKYSSSPLEWITMDTNIAYWLHPSSNAQIHFIGNIVTWTTGNITLVVYCLLFLTYLLRRRRKVEDIPQDSWEQLVLAGVVCLGGWAVNYLPFFLMEKTLFLYHYLPALTFKILQIPIVTEHLYIHVLRSSAQQKAFGGVILAVLCSVYMSYHSLSPLTYGQPALTSDKLAELRWRESWDILLRKR.

Transmembrane regions (helical) follow at residues 7-27 (PVSV…LALF), 67-87 (FGHM…NFVW), 105-125 (LIPA…VVEL), 127-147 (YSHF…SLIV), 150-170 (RFML…LSYL), 178-198 (SFFK…GIGV), 201-221 (MGMF…WQLI), and 239-259 (FLAL…IHLT). 3 MIR domains span residues 291–354 (PLDV…IKDP), 365–422 (PKPV…VDIV), and 426–486 (SEKE…VEEH). A run of 4 helical transmembrane segments spans residues 570–590 (IVTW…FLTY), 609–629 (LVLA…PFFL), 633–653 (TLFL…IPIV), and 670–690 (AFGG…HSLS).

The protein belongs to the glycosyltransferase 39 family. In terms of tissue distribution, widely expressed. Has particularly strong expression in testis, ovary, brain, liver and heart.

The protein localises to the endoplasmic reticulum membrane. It catalyses the reaction a di-trans,poly-cis-dolichyl beta-D-mannosyl phosphate + L-seryl-[protein] = 3-O-(alpha-D-mannosyl)-L-seryl-[protein] + a di-trans,poly-cis-dolichyl phosphate + H(+). It carries out the reaction a di-trans,poly-cis-dolichyl beta-D-mannosyl phosphate + L-threonyl-[protein] = 3-O-(alpha-D-mannosyl)-L-threonyl-[protein] + a di-trans,poly-cis-dolichyl phosphate + H(+). Its pathway is protein modification; protein glycosylation. Its function is as follows. Transfers mannosyl residues to the hydroxyl group of serine or threonine residues. Coexpression of both POMT1 and POMT2 is necessary for enzyme activity, expression of either POMT1 or POMT2 alone is insufficient. This is Protein O-mannosyl-transferase 1 from Danio rerio (Zebrafish).